Consider the following 37-residue polypeptide: Large ribosomal subunit protein bL36 (37 aa).

Belongs to the bacterial ribosomal protein bL36 family.

The chain is Large ribosomal subunit protein bL36 from Streptomyces avermitilis (strain ATCC 31267 / DSM 46492 / JCM 5070 / NBRC 14893 / NCIMB 12804 / NRRL 8165 / MA-4680).